A 467-amino-acid polypeptide reads, in one-letter code: Dimethylamine methyltransferase MtbB3 (467 aa).

O356 is a non-standard amino acid (pyrrolysine).

This sequence belongs to the dimethylamine methyltransferase family.

It carries out the reaction Co(I)-[dimethylamine-specific corrinoid protein] + dimethylamine + H(+) = methyl-Co(III)-[dimethylamine-specific corrinoid protein] + methylamine. It participates in one-carbon metabolism; methanogenesis from dimethylamine. In terms of biological role, catalyzes the transfer of a methyl group from dimethylamine to the corrinoid cofactor of MtbC. The protein is Dimethylamine methyltransferase MtbB3 (mtbB3) of Methanosarcina acetivorans (strain ATCC 35395 / DSM 2834 / JCM 12185 / C2A).